We begin with the raw amino-acid sequence, 552 residues long: Serine/threonine-protein kinase RIO2 (552 aa).

A Protein kinase domain is found at 97-272; the sequence is VGNQMGVGKE…DRDVKCIKDF (176 aa). Lysine 123 serves as a coordination point for ATP. The active-site Proton acceptor is the aspartate 228. 9 positions are modified to phosphoserine: serine 332, serine 335, serine 337, serine 350, serine 362, serine 380, serine 382, serine 385, and serine 390. Positions 399–408 match the Nuclear export signal motif; it reads ALEEIKGQVV. 3 positions are modified to phosphoserine: serine 412, serine 417, and serine 442. The residue at position 445 (tyrosine 445) is a Phosphotyrosine. Serine 548 is subject to Phosphoserine.

It belongs to the protein kinase superfamily. RIO-type Ser/Thr kinase family. Associated with late 40S pre-ribosomal particles. Interacts with PLK1 (via its N-terminus). It depends on Mg(2+) as a cofactor. Autophosphorylated (in vitro). Phosphorylation at Ser-335, Ser-380, Ser-548 by PLK1 affects the timing of the metaphase-anaphase transition.

The protein localises to the cytoplasm. The enzyme catalyses L-seryl-[protein] + ATP = O-phospho-L-seryl-[protein] + ADP + H(+). The catalysed reaction is L-threonyl-[protein] + ATP = O-phospho-L-threonyl-[protein] + ADP + H(+). Its function is as follows. Serine/threonine-protein kinase involved in the final steps of cytoplasmic maturation of the 40S ribosomal subunit. Involved in export of the 40S pre-ribosome particles (pre-40S) from the nucleus to the cytoplasm. Its kinase activity is required for the release of NOB1, PNO1 and LTV1 from the late pre-40S and the processing of 18S-E pre-rRNA to the mature 18S rRNA. Regulates the timing of the metaphase-anaphase transition during mitotic progression, and its phosphorylation, most likely by PLK1, regulates this function. This Homo sapiens (Human) protein is Serine/threonine-protein kinase RIO2.